The sequence spans 275 residues: Beta-lactamase OXA-2 (275 aa).

An N-terminal signal peptide occupies residues 1–21 (MAIRIFAILFSIFSLATFAHA). S72 (acyl-ester intermediate) is an active-site residue. K75 carries the N6-carboxylysine modification. 210-212 (KTG) is a binding site for substrate.

It belongs to the class-D beta-lactamase family.

The enzyme catalyses a beta-lactam + H2O = a substituted beta-amino acid. This is an oxacillin-hydrolyzing beta-lactamase. The polypeptide is Beta-lactamase OXA-2 (bla) (Escherichia coli).